Here is a 197-residue protein sequence, read N- to C-terminus: Recombination protein RecR (197 aa).

The C4-type zinc finger occupies 57–72; sequence CSVCFAITEDDPCWIC. The Toprim domain maps to 79–174; that stretch reads GTICVVEEPQ…KVTRLAHGIP (96 aa).

This sequence belongs to the RecR family.

In terms of biological role, may play a role in DNA repair. It seems to be involved in an RecBC-independent recombinational process of DNA repair. It may act with RecF and RecO. This is Recombination protein RecR from Citrifermentans bemidjiense (strain ATCC BAA-1014 / DSM 16622 / JCM 12645 / Bem) (Geobacter bemidjiensis).